The sequence spans 197 residues: Small ribosomal subunit protein uS4c (197 aa).

Positions 85-161 constitute an S4 RNA-binding domain; it reads MRLDNILFRL…TGKELANHLN (77 aa).

The protein belongs to the universal ribosomal protein uS4 family. In terms of assembly, part of the 30S ribosomal subunit. Contacts protein S5. The interaction surface between S4 and S5 is involved in control of translational fidelity.

It localises to the plastid. In terms of biological role, one of the primary rRNA binding proteins, it binds directly to 16S rRNA where it nucleates assembly of the body of the 30S subunit. Functionally, with S5 and S12 plays an important role in translational accuracy. The sequence is that of Small ribosomal subunit protein uS4c (rps4) from Cuscuta obtusiflora (Peruvian dodder).